Consider the following 274-residue polypeptide: uncharacterized protein (274 aa).

The segment covering 1–15 (MEESKTKRKEDRIDL) has biased composition (basic and acidic residues). Positions 1–40 (MEESKTKRKEDRIDLKNTPPQKKSKRDSTNDETARTSLRS) are disordered. In terms of domain architecture, G-patch spans 41 to 87 (IMPRGYKMMENMGYKEGETLGSNESALKEPIKVEINTKRRGIRAEKP).

The protein resides in the cytoplasm. Its subcellular location is the nucleus. This is an uncharacterized protein from Saccharomyces cerevisiae (strain ATCC 204508 / S288c) (Baker's yeast).